Here is a 293-residue protein sequence, read N- to C-terminus: Protease HtpX (293 aa).

The next 2 helical transmembrane spans lie at 4–24 (IALF…VLSL) and 34–54 (GLMI…LLMS). Histidine 139 is a Zn(2+) binding site. Glutamate 140 is a catalytic residue. A Zn(2+)-binding site is contributed by histidine 143. A run of 2 helical transmembrane segments spans residues 158–178 (VVNT…AGFL) and 193–213 (MVYF…ASII). Glutamate 222 serves as a coordination point for Zn(2+).

The protein belongs to the peptidase M48B family. Requires Zn(2+) as cofactor.

It localises to the cell inner membrane. This is Protease HtpX from Yersinia pseudotuberculosis serotype O:1b (strain IP 31758).